Here is a 280-residue protein sequence, read N- to C-terminus: Energy-coupling factor transporter ATP-binding protein EcfA1 (280 aa).

Residues L6–D241 enclose the ABC transporter domain. ATP is bound at residue G40 to S47.

This sequence belongs to the ABC transporter superfamily. Energy-coupling factor EcfA family. In terms of assembly, forms a stable energy-coupling factor (ECF) transporter complex composed of 2 membrane-embedded substrate-binding proteins (S component), 2 ATP-binding proteins (A component) and 2 transmembrane proteins (T component).

Its subcellular location is the cell membrane. In terms of biological role, ATP-binding (A) component of a common energy-coupling factor (ECF) ABC-transporter complex. Unlike classic ABC transporters this ECF transporter provides the energy necessary to transport a number of different substrates. This Bacillus cereus (strain ATCC 14579 / DSM 31 / CCUG 7414 / JCM 2152 / NBRC 15305 / NCIMB 9373 / NCTC 2599 / NRRL B-3711) protein is Energy-coupling factor transporter ATP-binding protein EcfA1.